Here is a 310-residue protein sequence, read N- to C-terminus: Ribosomal protein uL3 glutamine methyltransferase (310 aa).

Belongs to the protein N5-glutamine methyltransferase family. PrmB subfamily.

It catalyses the reaction L-glutaminyl-[ribosomal protein uL3] + S-adenosyl-L-methionine = N(5)-methyl-L-glutaminyl-[ribosomal protein uL3] + S-adenosyl-L-homocysteine + H(+). Specifically methylates large ribosomal subunit protein uL3 on 'Gln-150'. The polypeptide is Ribosomal protein uL3 glutamine methyltransferase (Salmonella typhi).